The following is a 287-amino-acid chain: Cell wall-binding protein YocH (287 aa).

Positions 1–25 (MKKTIMSFVAVAALSTTAFGAHASA) are cleaved as a signal peptide. 2 consecutive LysM domains span residues 26–69 (KEIT…KLTI) and 78–121 (GQYT…TLSV). Over residues 130 to 143 (TATENAQTNAPQAA) the composition is skewed to low complexity. Residues 130-193 (TATENAQTNA…SNTNNQEASK (64 aa)) form a disordered region. A compositionally biased stretch (basic and acidic residues) spans 165–181 (QETKAEAETSVNTEEKA). Residues 182–193 (VQSNTNNQEASK) are compositionally biased toward polar residues.

The protein localises to the secreted. Its subcellular location is the cell wall. This chain is Cell wall-binding protein YocH (yocH), found in Bacillus subtilis (strain 168).